Consider the following 82-residue polypeptide: Defensin-like protein 156 (82 aa).

A signal peptide spans 1 to 27; the sequence is MAKISCSYFLVLMLVFSVFSLVEKTKG. 4 cysteine pairs are disulfide-bonded: cysteine 31-cysteine 77, cysteine 41-cysteine 60, cysteine 46-cysteine 71, and cysteine 50-cysteine 73.

This sequence belongs to the DEFL family. Expressed in flower buds, but not in stems, roots or rosette leaves.

It is found in the secreted. This chain is Defensin-like protein 156 (LCR21), found in Arabidopsis thaliana (Mouse-ear cress).